Consider the following 85-residue polypeptide: Cell division topological specificity factor (85 aa).

Belongs to the MinE family.

Prevents the cell division inhibition by proteins MinC and MinD at internal division sites while permitting inhibition at polar sites. This ensures cell division at the proper site by restricting the formation of a division septum at the midpoint of the long axis of the cell. The polypeptide is Cell division topological specificity factor (Xylella fastidiosa (strain M23)).